A 427-amino-acid polypeptide reads, in one-letter code: Glutamate-1-semialdehyde 2,1-aminomutase (427 aa).

Lys264 carries the N6-(pyridoxal phosphate)lysine modification.

The protein belongs to the class-III pyridoxal-phosphate-dependent aminotransferase family. HemL subfamily. As to quaternary structure, homodimer. The cofactor is pyridoxal 5'-phosphate.

The protein localises to the cytoplasm. It catalyses the reaction (S)-4-amino-5-oxopentanoate = 5-aminolevulinate. It participates in porphyrin-containing compound metabolism; protoporphyrin-IX biosynthesis; 5-aminolevulinate from L-glutamyl-tRNA(Glu): step 2/2. The polypeptide is Glutamate-1-semialdehyde 2,1-aminomutase (Clostridium botulinum (strain Alaska E43 / Type E3)).